We begin with the raw amino-acid sequence, 2262 residues long: Klarsicht protein (2262 aa).

Disordered regions lie at residues 1 to 140 (MEMQ…VGND), 345 to 410 (QQQQ…GEGN), 442 to 475 (AANG…LNEV), 514 to 561 (QSQS…PDIG), 800 to 832 (ATSS…DKEN), 859 to 898 (SNYD…QLQM), 1000 to 1031 (HLPP…VSPV), 1115 to 1157 (PSCK…SEGF), 1246 to 1316 (SGLA…ELGG), and 1533 to 1670 (VRRK…QQSR). A required for apical microtubules localization region spans residues 1–1774 (MEMQQENETG…KPTPELLDTE (1774 aa)). At 1 to 2215 (MEMQQENETG…KRGWAWRIAR (2215 aa)) the chain is on the cytoplasmic side. Basic and acidic residues predominate over residues 58–67 (KIEHTTKPLK). The segment covering 131–140 (NYGTNSVGND) has biased composition (polar residues). Positions 345–402 (QQQQLSSQQPASLTSNCSSESTSESATKSSSLSSGFASDPVTTPIGTAAAAPPSSSTH) are enriched in low complexity. Acidic residues predominate over residues 446 to 475 (LDDDEDEEEDTEDDSFGYEGEATEDDLNEV). Residues 514–525 (QSQSRSQQVPSQ) are compositionally biased toward low complexity. A compositionally biased stretch (acidic residues) spans 546–560 (EADEELEEEDEDPDI). Low complexity-rich tracts occupy residues 809–818 (STAVSSTTAT) and 859–881 (SNYD…SNSN). The span at 882–894 (GRLTETSATSRVT) shows a compositional bias: polar residues. Residues 1006 to 1018 (PAKSAKSTKSQAS) are compositionally biased toward low complexity. Residues 1019–1028 (NATVSGSTLV) are compositionally biased toward polar residues. The span at 1246–1259 (SGLASHSISESALD) shows a compositional bias: polar residues. Residues 1267–1280 (PRAASSSGTGSNAA) are compositionally biased toward low complexity. Basic residues predominate over residues 1288–1299 (SLRRRKARKKRI). A compositionally biased stretch (low complexity) spans 1550–1559 (QSDQQQQQLQ). Positions 1560–1583 (VTPSLSASATALMTTPKNQSTSHQ) are enriched in polar residues. Basic and acidic residues-rich tracts occupy residues 1586–1596 (HRAESVGRKLD) and 1610–1640 (RTSE…EKCI). Residues 1809–1842 (LTKQERRLQSALEEQEQQQESEQLKQQKLVEEEK) are a coiled coil. The tract at residues 2092 to 2205 (HQQKQQIQQN…GEGADPAQTS (114 aa)) is disordered. Low complexity predominate over residues 2093 to 2105 (QQKQQIQQNQTQQ). The segment covering 2130 to 2142 (RRGKGARKARQAK) has biased composition (basic residues). Residues 2207–2262 (RGWAWRIARAAVPMQVALFTIFCAACLMQPNCCDNLNNLSMSFTPQLRYIRGPPPI) enclose the KASH domain. Residues 2216–2236 (AAVPMQVALFTIFCAACLMQP) traverse the membrane as a helical; Anchor for type IV membrane protein segment. Topologically, residues 2237 to 2262 (NCCDNLNNLSMSFTPQLRYIRGPPPI) are perinuclear space.

It belongs to the nesprin family. In terms of assembly, core component of LINC complexes which are composed of inner nuclear membrane SUN domain-containing proteins coupled to outer nuclear membrane KASH domain-containing nesprins. Interacts with kud. Interacts with Msp300; this interaction allows the anchoring of Msp300 nuclear ring structure to the nuclear envelope. Expressed ubiquitously in the eye disk, but at much higher levels posterior to the morphogenetic furrow. Expressed in R-cells and also in non-neural cone cells.

The protein resides in the cytoplasm. The protein localises to the cytoskeleton. Its subcellular location is the microtubule organizing center. It is found in the perinuclear region. It localises to the nucleus membrane. The protein resides in the nucleus envelope. Functionally, component of the LINC (LInker of Nucleoskeleton and Cytoskeleton) complex involved in the connection between the nuclear lamina and the cytoskeleton. Plays a role in the nuclear positioning and links the nucleus to the microtubule organizing center (MTOC). Collaborates with Klar to promote even spacing of the myonuclei at the periphery of striated muscle fibers by mediating a tight association between a nuclear ring structure of Msp300 and the plus ends of a unique astral microtubule (MT) network. In Drosophila melanogaster (Fruit fly), this protein is Klarsicht protein.